Reading from the N-terminus, the 62-residue chain is MAVPKRKPSVSRRKIRNVFIRAEMKKNLSNYSICKHCNYVKKKHHICNNCGYYKESLIYKIV.

The protein belongs to the bacterial ribosomal protein bL32 family.

It localises to the mitochondrion. This chain is Large ribosomal subunit protein bL32m (RPL32), found in Reclinomonas americana.